Consider the following 493-residue polypeptide: Putative MgpC-like protein MPN_414 (493 aa).

Residues 1 to 14 (MKPTSLPKNFTNNP) show a composition bias toward polar residues. Disordered stretches follow at residues 1–92 (MKPT…GHNS) and 441–493 (KSAR…SGNH). Composition is skewed to basic and acidic residues over residues 25–34 (DNGRAYRKLN) and 44–56 (DSTK…DKDG). Polar residues-rich tracts occupy residues 72 to 92 (VSST…GHNS) and 445 to 472 (ENAQ…SPCR). Positions 482–493 (RVTEEERSSGNH) are enriched in basic and acidic residues.

Belongs to the MgpC family.

This chain is Putative MgpC-like protein MPN_414, found in Mycoplasma pneumoniae (strain ATCC 29342 / M129 / Subtype 1) (Mycoplasmoides pneumoniae).